Consider the following 23-residue polypeptide: Magainin-BM2 (23 aa).

Expressed by the skin glands.

Its subcellular location is the secreted. Antimicrobial peptide. This Xenopus boumbaensis (Mawa clawed frog) protein is Magainin-BM2.